Here is a 312-residue protein sequence, read N- to C-terminus: Nicotinamide adenine dinucleotide transporter 1, chloroplastic (312 aa).

Solcar repeat units follow at residues 11–103, 111–199, and 211–299; these read KNVL…LKSF, LSVG…IKVY, and LNAR…VHRF. The next 6 helical transmembrane spans lie at 17–37, 78–98, 117–137, 171–191, 216–232, and 271–293; these read AAAG…LDVI, GLSP…TMYD, VLAA…LWVV, GLYS…IQFP, VAVA…TLTY, and FYRG…FTSF.

It belongs to the mitochondrial carrier (TC 2.A.29) family. In terms of tissue distribution, highly expressed in young leaf mesophyll cells, root tips and at the branches of adventitious roots. Low expression in all flower tissues and not detected in siliques and seeds.

It localises to the plastid. The protein resides in the chloroplast membrane. With respect to regulation, inhibited by pyridoxal 5'-phosphate, bathophenanthroline, tannic acid, mersalyl, mercuric chloride, p-hydroxymercuribenzoate, p-hydroxymercuribenzoate sulfonate, bromocresol purple and N-ethylmaleimide. Its function is as follows. Mediates the NAD(+) import into chloroplast. Favors the NAD(+)(in)/ADP or AMP(out) antiport exchange, but is also able to catalyze a low unidirectional transport (uniport) of NAD(+). Transports NAD(+), nicotinic acid adenine dinucleotide, nicotinamide mononucleotide, nicotinic acid mononucleotide, FAD, FMN, TTP, TDP, TMP, UTP, UDP, UMP, CTP, CDP, CMP, GTP, GDP, GMP, 3'-AMP, ATP, ADP, and AMP, has low transport activity with cAMP, pyrophosphate, NADH and alpha-NAD(+), and has no activity with NADP(+), NADPH, nicotinamide, nicotinic acid, adenosine, thiamine mono- or diphosphate, inorganic phosphate, CoA, folate, NaCl, malate, malonate, citrate, fumarate, aspartate, glutamate, S-adenosylmethionine, lysine, arginine, and ornithine. The chain is Nicotinamide adenine dinucleotide transporter 1, chloroplastic (NDT1) from Arabidopsis thaliana (Mouse-ear cress).